Consider the following 379-residue polypeptide: 1-deoxy-D-xylulose 5-phosphate reductoisomerase (379 aa).

NADPH is bound by residues threonine 10, glycine 11, serine 12, isoleucine 13, arginine 38, asparagine 39, and asparagine 121. A 1-deoxy-D-xylulose 5-phosphate-binding site is contributed by lysine 122. An NADPH-binding site is contributed by glutamate 123. Aspartate 147 lines the Mn(2+) pocket. Residues serine 148, glutamate 149, serine 173, and histidine 196 each contribute to the 1-deoxy-D-xylulose 5-phosphate site. Glutamate 149 contributes to the Mn(2+) binding site. Glycine 202 is a binding site for NADPH. 1-deoxy-D-xylulose 5-phosphate-binding residues include serine 209, asparagine 214, lysine 215, and glutamate 218. Residue glutamate 218 coordinates Mn(2+).

Belongs to the DXR family. Mg(2+) is required as a cofactor. The cofactor is Mn(2+).

The catalysed reaction is 2-C-methyl-D-erythritol 4-phosphate + NADP(+) = 1-deoxy-D-xylulose 5-phosphate + NADPH + H(+). It functions in the pathway isoprenoid biosynthesis; isopentenyl diphosphate biosynthesis via DXP pathway; isopentenyl diphosphate from 1-deoxy-D-xylulose 5-phosphate: step 1/6. Functionally, catalyzes the NADPH-dependent rearrangement and reduction of 1-deoxy-D-xylulose-5-phosphate (DXP) to 2-C-methyl-D-erythritol 4-phosphate (MEP). This is 1-deoxy-D-xylulose 5-phosphate reductoisomerase from Chlamydia trachomatis serovar L2 (strain ATCC VR-902B / DSM 19102 / 434/Bu).